The chain runs to 971 residues: Exportin-2 (971 aa).

The 74-residue stretch at alanine 29–threonine 102 folds into the Importin N-terminal domain.

The protein belongs to the XPO2/CSE1 family. In terms of assembly, interacts with cftr. In terms of tissue distribution, detected in larval gut, liver, exocrine pancreas and part of the brain and retina at 96 hpf.

It is found in the cytoplasm. The protein localises to the nucleus. The protein resides in the apical cell membrane. Its subcellular location is the basal cell membrane. It localises to the lateral cell membrane. Functionally, export receptor for importin alpha. Mediates importin-alpha re-export from the nucleus to the cytoplasm after import substrates have been released into the nucleoplasm. Negatively regulates fluid secretion and plays a role in fluid homeostasis by down-regulating cftr activity. The protein is Exportin-2 (cse1l) of Danio rerio (Zebrafish).